The sequence spans 290 residues: Diaminopimelate epimerase (290 aa).

Positions 17, 49, and 69 each coordinate substrate. The active-site Proton donor is the C78. Substrate-binding positions include G79 to N80, N166, N199, and E217 to R218. The active-site Proton acceptor is C226. Residue G227–S228 participates in substrate binding.

The protein belongs to the diaminopimelate epimerase family. Homodimer.

Its subcellular location is the cytoplasm. It catalyses the reaction (2S,6S)-2,6-diaminopimelate = meso-2,6-diaminopimelate. It functions in the pathway amino-acid biosynthesis; L-lysine biosynthesis via DAP pathway; DL-2,6-diaminopimelate from LL-2,6-diaminopimelate: step 1/1. In terms of biological role, catalyzes the stereoinversion of LL-2,6-diaminopimelate (L,L-DAP) to meso-diaminopimelate (meso-DAP), a precursor of L-lysine and an essential component of the bacterial peptidoglycan. In Afipia carboxidovorans (strain ATCC 49405 / DSM 1227 / KCTC 32145 / OM5) (Oligotropha carboxidovorans), this protein is Diaminopimelate epimerase.